The chain runs to 448 residues: Glucose-6-phosphate isomerase (448 aa).

The Proton donor role is filled by Glu-288. Active-site residues include His-309 and Lys-423.

This sequence belongs to the GPI family.

It localises to the cytoplasm. It catalyses the reaction alpha-D-glucose 6-phosphate = beta-D-fructose 6-phosphate. The protein operates within carbohydrate biosynthesis; gluconeogenesis. It functions in the pathway carbohydrate degradation; glycolysis; D-glyceraldehyde 3-phosphate and glycerone phosphate from D-glucose: step 2/4. In terms of biological role, catalyzes the reversible isomerization of glucose-6-phosphate to fructose-6-phosphate. This chain is Glucose-6-phosphate isomerase, found in Fusobacterium nucleatum subsp. nucleatum (strain ATCC 25586 / DSM 15643 / BCRC 10681 / CIP 101130 / JCM 8532 / KCTC 2640 / LMG 13131 / VPI 4355).